A 278-amino-acid chain; its full sequence is Ribosomal RNA small subunit methyltransferase A (278 aa).

Positions 28, 30, 55, 77, 103, and 122 each coordinate S-adenosyl-L-methionine.

This sequence belongs to the class I-like SAM-binding methyltransferase superfamily. rRNA adenine N(6)-methyltransferase family. RsmA subfamily.

The protein resides in the cytoplasm. It catalyses the reaction adenosine(1518)/adenosine(1519) in 16S rRNA + 4 S-adenosyl-L-methionine = N(6)-dimethyladenosine(1518)/N(6)-dimethyladenosine(1519) in 16S rRNA + 4 S-adenosyl-L-homocysteine + 4 H(+). In terms of biological role, specifically dimethylates two adjacent adenosines (A1518 and A1519) in the loop of a conserved hairpin near the 3'-end of 16S rRNA in the 30S particle. May play a critical role in biogenesis of 30S subunits. This chain is Ribosomal RNA small subunit methyltransferase A, found in Cereibacter sphaeroides (strain ATCC 17029 / ATH 2.4.9) (Rhodobacter sphaeroides).